Here is a 469-residue protein sequence, read N- to C-terminus: Keratin, type I cytoskeletal 26 (469 aa).

A head region spans residues 1–82 (MSFRLSSGSR…ENEHGLLPGN (82 aa)). The coil 1A stretch occupies residues 83–118 (EKVTLQNLNDRLASYLDHVCTLEEANADLEQKIKGW). In terms of domain architecture, IF rod spans 83 to 398 (EKVTLQNLND…KLIDGEGRKS (316 aa)). The tract at residues 119–140 (YEKYGPGSGRQLAYDCSKYFSV) is linker 1. Positions 141 to 232 (TEDLKRQIIS…KNHQEEMKVM (92 aa)) are coil 1B. The segment at 233-255 (QGAAGGNVNVEINAAPGVDLTVL) is linker 12. The segment at 256 to 394 (LNNMRAEYED…EMYCKLIDGE (139 aa)) is coil 2. Positions 395 to 465 (GRKSKSTYCK…NITMEQRLPS (71 aa)) are tail. 2 disordered regions span residues 398–421 (SKSTYCKSEGRGPKNSENQVKDSK) and 450–469 (KSSKISNITMEQRLPSKVPQ). Over residues 405–421 (SEGRGPKNSENQVKDSK) the composition is skewed to basic and acidic residues.

It belongs to the intermediate filament family. As to quaternary structure, heterotetramer of two type I and two type II keratins.

The chain is Keratin, type I cytoskeletal 26 from Bos taurus (Bovine).